The chain runs to 387 residues: Patatin-12 (387 aa).

Positions 1–23 are cleaved as a signal peptide; that stretch reads MATTKSFLILIVMILATTSSTFA. Positions 32–230 constitute a PNPLA domain; sequence LSIDGGGIKG…TVGDPALLSL (199 aa). The GXGXXG motif lies at 36–41; that stretch reads GGGIKG. The GXSXG signature appears at 75–79; the sequence is GTSTG. Residue S77 is the Nucleophile of the active site. N115 carries N-linked (GlcNAc...) asparagine glycosylation. The active-site Proton acceptor is the D216. Positions 216–218 match the DGA/G motif; it reads DGG. A coiled-coil region spans residues 322 to 385; sequence ENALTGTTTE…DRKKLRANKA (64 aa).

This sequence belongs to the patatin family. Tuber.

The protein resides in the vacuole. Functionally, probable lipolytic acyl hydrolase (LAH), an activity which is thought to be involved in the response of tubers to pathogens. The sequence is that of Patatin-12 from Solanum tuberosum (Potato).